Here is a 321-residue protein sequence, read N- to C-terminus: Protein translocase subunit SecF (321 aa).

6 consecutive transmembrane segments (helical) span residues 23-43 (VWLISGFAVLISFLGFFFSWT), 158-178 (LQTTLISLLVAFSCVAIYISI), 189-209 (LLALFHDVLIVCGVFSWLGII), 217-237 (LFAVALLTIAGYSVNDTVVVF), 258-280 (FAVSATLTRTLYTSGTTLLPLIA), and 290-312 (YWFAIALALGVVVGSWSSIALVP).

The protein belongs to the SecD/SecF family. SecF subfamily. Forms a complex with SecD. Part of the essential Sec protein translocation apparatus which comprises SecA, SecYEG and auxiliary proteins SecDF. Other proteins may also be involved.

It is found in the cell inner membrane. Its function is as follows. Part of the Sec protein translocase complex. Interacts with the SecYEG preprotein conducting channel. SecDF uses the proton motive force (PMF) to complete protein translocation after the ATP-dependent function of SecA. In terms of biological role, probably participates in protein translocation into and across both the cytoplasmic and thylakoid membranes in cyanobacterial cells. This chain is Protein translocase subunit SecF, found in Prochlorococcus marinus (strain SARG / CCMP1375 / SS120).